The sequence spans 271 residues: MASENMTPQDYIGHHLNNLQMDLRTFSLVDPHNPPATFWTLNIDSMFFSVVLGLLFLVMFRSVAKKATSGVPGKFQTAIELIVGFVHGSVKDMYHGKSKLIAPLALTIFVWVFLMNLMDLLPIDLLPYIAEHWLGLPATRVVPSADVNITLSMALGVFILILFYSIKMKGIGGFAKELTLQPFNHWAFIPVNLILEGVSLLSKPVSLGLRLFGNMYAGELIFILIAGLLPWWSQWILNVPWAIFHILIITLQAFIFMVLTIVYLSMASEEH.

Helical transmembrane passes span 38 to 58 (FWTLNIDSMFFSVVLGLLFLV), 100 to 120 (LIAPLALTIFVWVFLMNLMDL), 146 to 166 (DVNITLSMALGVFILILFYSI), 220 to 240 (LIFILIAGLLPWWSQWILNVP), and 242 to 262 (AIFHILIITLQAFIFMVLTIV).

Belongs to the ATPase A chain family. In terms of assembly, F-type ATPases have 2 components, CF(1) - the catalytic core - and CF(0) - the membrane proton channel. CF(1) has five subunits: alpha(3), beta(3), gamma(1), delta(1), epsilon(1). CF(0) has three main subunits: a(1), b(2) and c(9-12). The alpha and beta chains form an alternating ring which encloses part of the gamma chain. CF(1) is attached to CF(0) by a central stalk formed by the gamma and epsilon chains, while a peripheral stalk is formed by the delta and b chains.

The protein resides in the cell inner membrane. Key component of the proton channel; it plays a direct role in the translocation of protons across the membrane. This chain is ATP synthase subunit a, found in Salmonella arizonae (strain ATCC BAA-731 / CDC346-86 / RSK2980).